Here is an 83-residue protein sequence, read N- to C-terminus: Cell division topological specificity factor (83 aa).

It belongs to the MinE family.

Its function is as follows. Prevents the cell division inhibition by proteins MinC and MinD at internal division sites while permitting inhibition at polar sites. This ensures cell division at the proper site by restricting the formation of a division septum at the midpoint of the long axis of the cell. The protein is Cell division topological specificity factor of Alcanivorax borkumensis (strain ATCC 700651 / DSM 11573 / NCIMB 13689 / SK2).